The primary structure comprises 244 residues: UPF0280 protein Msp_1322 (244 aa).

Belongs to the UPF0280 family.

This chain is UPF0280 protein Msp_1322, found in Methanosphaera stadtmanae (strain ATCC 43021 / DSM 3091 / JCM 11832 / MCB-3).